Here is a 467-residue protein sequence, read N- to C-terminus: Protein arginine methyltransferase NDUFAF7 homolog, mitochondrial (467 aa).

This sequence belongs to the NDUFAF7 family.

It is found in the mitochondrion. It carries out the reaction L-arginyl-[protein] + 2 S-adenosyl-L-methionine = N(omega),N(omega)'-dimethyl-L-arginyl-[protein] + 2 S-adenosyl-L-homocysteine + 2 H(+). In terms of biological role, arginine methyltransferase involved in the assembly or stability of mitochondrial NADH:ubiquinone oxidoreductase complex (complex I). The polypeptide is Protein arginine methyltransferase NDUFAF7 homolog, mitochondrial (Schizosaccharomyces pombe (strain 972 / ATCC 24843) (Fission yeast)).